Consider the following 436-residue polypeptide: APO protein 1, chloroplastic (436 aa).

A chloroplast-targeting transit peptide spans 1-47; the sequence is MLLVSPACRGVYLQTIDPKPIDFSARASYALCFQIPTSIPKRECLMR. APO domains are found at residues 155 to 240 and 329 to 414; these read ACSE…EIPE and ACGY…RVPQ.

The protein belongs to the APO family. In terms of tissue distribution, expressed at low level. Expressed at higher level in leaves. Expressed at lower level in roots, stems, siliques and flowers.

The protein localises to the plastid. It is found in the chloroplast. Functionally, involved in the stable assembly of several 4Fe-4S cluster-containing complexes of chloroplasts. May participate in 4Fe-4S cofactor incorporation into psaA and/or psaB during translation. The chain is APO protein 1, chloroplastic (APO1) from Arabidopsis thaliana (Mouse-ear cress).